We begin with the raw amino-acid sequence, 276 residues long: Syntaxin-12 (276 aa).

Ser2 is modified (N-acetylserine). Topologically, residues 2 to 248 (SYGPLDMYRN…RAAYYQKKSR (247 aa)) are cytoplasmic. Positions 33 to 131 (IQRISQATAQ…RRVSEKEKES (99 aa)) form a coiled coil. Residues Ser139, Ser142, Ser218, and Ser225 each carry the phosphoserine modification. A t-SNARE coiled-coil homology domain is found at 178–240 (LELIKERETA…ERATEQLQRA (63 aa)). A helical; Anchor for type IV membrane protein membrane pass occupies residues 249–269 (KKMCILVLVLSVIILILGLII). At 270-276 (WLVYKTK) the chain is on the vesicular side.

This sequence belongs to the syntaxin family. Interacts with NAPA and SNAP23. Identified in a complex containing STX6, STX12, VAMP4 and VTI1A. Associates with the BLOC-1 complex. Interacts with BLOC1S6. Interacts with GRIPAP1. Forms a complex with GRIP1, GRIA2 and NSG1; controls the intracellular fate of AMPAR and the endosomal sorting of the GRIA2 subunit toward recycling and membrane targeting. Interacts with NSG1. Interacts with TPC1. Interacts (via N-terminus) with VPS13B.

Its subcellular location is the endosome membrane. It localises to the golgi apparatus membrane. It is found in the endomembrane system. The protein resides in the early endosome membrane. The protein localises to the recycling endosome membrane. In terms of biological role, SNARE promoting fusion of transport vesicles with target membranes. Together with SNARE STX6, promotes movement of vesicles from endosomes to the cell membrane, and may therefore function in the endocytic recycling pathway. Through complex formation with GRIP1, GRIA2 and NSG1 controls the intracellular fate of AMPAR and the endosomal sorting of the GRIA2 subunit toward recycling and membrane targeting. The polypeptide is Syntaxin-12 (STX12) (Homo sapiens (Human)).